A 146-amino-acid chain; its full sequence is Urease accessory protein UreE 1 (146 aa).

The protein belongs to the UreE family.

The protein localises to the cytoplasm. Involved in urease metallocenter assembly. Binds nickel. Probably functions as a nickel donor during metallocenter assembly. The chain is Urease accessory protein UreE 1 from Pseudomonas syringae pv. syringae (strain B728a).